The chain runs to 225 residues: Glutathione S-transferase U3 (225 aa).

A GST N-terminal domain is found at 6–86 (EGVKLIGSWA…YIDQTWTNNP (81 aa)). Glutathione contacts are provided by residues 16-17 (SP), 43-44 (VK), 57-58 (KV), and 70-71 (ES). Positions 91-218 (SPYDKAMARF…EKHIEHMMKI (128 aa)) constitute a GST C-terminal domain. Threonine 152 is modified (phosphothreonine).

This sequence belongs to the GST superfamily. Tau family.

It localises to the cytoplasm. The protein localises to the cytosol. The catalysed reaction is RX + glutathione = an S-substituted glutathione + a halide anion + H(+). Functionally, may be involved in the conjugation of reduced glutathione to a wide number of exogenous and endogenous hydrophobic electrophiles and have a detoxification role against certain herbicides. The polypeptide is Glutathione S-transferase U3 (GSTU3) (Arabidopsis thaliana (Mouse-ear cress)).